The sequence spans 86 residues: MIKLRLKRFGKKREASYRIVAINNLARRDGRPLEELGFYNPRTDEVRLDVPGIVKRLQQGAQPTDTVRRILVKANVFEQVSATAAS.

This sequence belongs to the bacterial ribosomal protein bS16 family.

The chain is Small ribosomal subunit protein bS16 from Nostoc punctiforme (strain ATCC 29133 / PCC 73102).